Here is a 473-residue protein sequence, read N- to C-terminus: H(+)/Cl(-) exchange transporter ClcA (473 aa).

At 1-32 the chain is on the cytoplasmic side; it reads MNTDTPTFEAQQVVRLRRGDLIRRLLQRDKTP. Residues 33 to 69 traverse the membrane as a helical segment; the sequence is LAILLTAAVVGTVTGLIGVAFEKAVTWVQNLRIGALV. Topologically, residues 70–76 are periplasmic; sequence QTADYAI. Residues 77-100 traverse the membrane as a helical segment; the sequence is LVWPLAFILSALLAMVGYFLVRKF. Residues 101–108 are Cytoplasmic-facing; it reads APEAGGSG. Positions 106–110 match the Selectivity filter part_1 motif; sequence GSGIP. S107 contributes to the chloride binding site. Positions 109-116 form an intramembrane region, helical; that stretch reads IPEIEGAL. Residues 117-123 lie on the Cytoplasmic side of the membrane; it reads EELRPVR. Residues 124 to 141 traverse the membrane as a helical segment; sequence WWRVLPVKFVGGMGTLGA. Over 142–147 the chain is Periplasmic; the sequence is GMVLGR. The short motif at 146-150 is the Selectivity filter part_2 element; that stretch reads GREGP. The chain crosses the membrane as a helical span at residues 148-166; it reads EGPTVQIGGNIGRMVLDLF. The Cytoplasmic segment spans residues 167–176; that stretch reads RMRSAEARHT. Intramembrane regions (helical) lie at residues 177–189 and 193–201; these read LLAT…LSAA and PLAGILFII. Over 202 to 214 the chain is Cytoplasmic; that stretch reads EEMRPQFRYNLIS. The chain crosses the membrane as a helical span at residues 215–232; that stretch reads IKAVFTGVIMSSIVFRIF. Residues 233-252 are Periplasmic-facing; that stretch reads NGEAPIIEVGKLSNAPVNTL. Residues 253 to 281 form a helical membrane-spanning segment; it reads WLYLILGMIFGCVGPLFNHLVLRTQDMFQ. Residues 282 to 287 are Cytoplasmic-facing; sequence RFHGGE. Residues 288-309 form a helical membrane-spanning segment; it reads IKKWVLMGGAIGGLCGILGLIE. Topologically, residues 310-329 are periplasmic; it reads PEAAGGGFNLIPIAAAGNYS. The chain crosses the membrane as a helical span at residues 330-349; it reads VGLLLFIFIARVLTTLLCFS. At 350 to 354 the chain is on the cytoplasmic side; the sequence is SGAPG. The short motif at 355–359 is the Selectivity filter part_3 element; sequence GIFAP. Residues 355–376 form a helical membrane-spanning segment; that stretch reads GIFAPMLALGTLLGTAFGMAAA. The chloride site is built by I356 and F357. Residues 377–386 lie on the Periplasmic side of the membrane; sequence ACFPQYHLEA. The helical intramembrane region spans 387 to 401; it reads GTFAIAGMGALLAAS. The note=Loop between two helices intramembrane region spans 402–404; the sequence is VRA. Residues 405–416 constitute an intramembrane region (helical); that stretch reads PLTGIVLVLEMT. Positions 417–421 form an intramembrane region, note=Loop between two helices; that stretch reads DNYQL. The chain crosses the membrane as a helical span at residues 422–438; it reads ILPMIITCLGATLLAQF. The Cytoplasmic portion of the chain corresponds to 439–473; sequence MGGKPLYSTILARTLAKQDAEQAAKSQRSVAGENT. Y445 contacts chloride.

Belongs to the chloride channel (TC 2.A.49) family. ClcA subfamily. As to quaternary structure, homodimer.

Its subcellular location is the cell inner membrane. The enzyme catalyses 2 chloride(in) + H(+)(out) = 2 chloride(out) + H(+)(in). In terms of biological role, proton-coupled chloride transporter. Functions as antiport system and exchanges two chloride ions for 1 proton. Probably acts as an electrical shunt for an outwardly-directed proton pump that is linked to amino acid decarboxylation, as part of the extreme acid resistance (XAR) response. This Citrobacter koseri (strain ATCC BAA-895 / CDC 4225-83 / SGSC4696) protein is H(+)/Cl(-) exchange transporter ClcA.